The sequence spans 199 residues: N-(5'-phosphoribosyl)anthranilate isomerase (199 aa).

The protein belongs to the TrpF family.

It carries out the reaction N-(5-phospho-beta-D-ribosyl)anthranilate = 1-(2-carboxyphenylamino)-1-deoxy-D-ribulose 5-phosphate. It functions in the pathway amino-acid biosynthesis; L-tryptophan biosynthesis; L-tryptophan from chorismate: step 3/5. In Streptococcus pneumoniae (strain ATCC 700669 / Spain 23F-1), this protein is N-(5'-phosphoribosyl)anthranilate isomerase.